The sequence spans 129 residues: MAKEKTRVKRKERKNISSGVAHVNSTFNNTMITIADAQGNAISWSSAGLMGFKGSRKSTPFAAQMAAEDAGKKAMEHGMRTLEVEVCGPGSGRESALRALQSVGFTVTTIRDVTPIPHNGCRPPKRRRV.

It belongs to the universal ribosomal protein uS11 family. In terms of assembly, part of the 30S ribosomal subunit. Interacts with proteins S7 and S18. Binds to IF-3.

In terms of biological role, located on the platform of the 30S subunit, it bridges several disparate RNA helices of the 16S rRNA. Forms part of the Shine-Dalgarno cleft in the 70S ribosome. The protein is Small ribosomal subunit protein uS11 of Parvibaculum lavamentivorans (strain DS-1 / DSM 13023 / NCIMB 13966).